We begin with the raw amino-acid sequence, 278 residues long: UPF0276 protein Ssed_2857 (278 aa).

The protein belongs to the UPF0276 family.

This is UPF0276 protein Ssed_2857 from Shewanella sediminis (strain HAW-EB3).